Here is a 171-residue protein sequence, read N- to C-terminus: Methylated-DNA--protein-cysteine methyltransferase (171 aa).

Cys-139 functions as the Nucleophile; methyl group acceptor in the catalytic mechanism.

It belongs to the MGMT family.

The protein localises to the cytoplasm. The catalysed reaction is a 6-O-methyl-2'-deoxyguanosine in DNA + L-cysteinyl-[protein] = S-methyl-L-cysteinyl-[protein] + a 2'-deoxyguanosine in DNA. The enzyme catalyses a 4-O-methyl-thymidine in DNA + L-cysteinyl-[protein] = a thymidine in DNA + S-methyl-L-cysteinyl-[protein]. Involved in the cellular defense against the biological effects of O6-methylguanine (O6-MeG) and O4-methylthymine (O4-MeT) in DNA. Repairs the methylated nucleobase in DNA by stoichiometrically transferring the methyl group to a cysteine residue in the enzyme. This is a suicide reaction: the enzyme is irreversibly inactivated. The chain is Methylated-DNA--protein-cysteine methyltransferase from Shigella flexneri.